The sequence spans 188 residues: Archaemetzincin (188 aa).

Zn(2+) is bound at residue H137. Residue E138 is the Proton acceptor of the active site. 6 residues coordinate Zn(2+): H141, H147, C148, C153, C172, and C175.

This sequence belongs to the peptidase M54 family. Monomer. It depends on Zn(2+) as a cofactor.

In terms of biological role, probable zinc metalloprotease whose natural substrate is unknown. In Pyrococcus abyssi (strain GE5 / Orsay), this protein is Archaemetzincin.